A 62-amino-acid polypeptide reads, in one-letter code: Large ribosomal subunit protein bL33 (62 aa).

Belongs to the bacterial ribosomal protein bL33 family.

The chain is Large ribosomal subunit protein bL33 from Phocaeicola vulgatus (strain ATCC 8482 / DSM 1447 / JCM 5826 / CCUG 4940 / NBRC 14291 / NCTC 11154) (Bacteroides vulgatus).